A 377-amino-acid polypeptide reads, in one-letter code: Erythronate-4-phosphate dehydrogenase (377 aa).

The substrate site is built by Ser45 and Thr67. NAD(+) is bound by residues 127 to 128 (QV), Asp147, and Thr176. Arg209 is an active-site residue. Asp233 lines the NAD(+) pocket. Glu238 is an active-site residue. His255 functions as the Proton donor in the catalytic mechanism. Gly258 is an NAD(+) binding site. Substrate is bound at residue Tyr259.

The protein belongs to the D-isomer specific 2-hydroxyacid dehydrogenase family. PdxB subfamily. As to quaternary structure, homodimer.

It is found in the cytoplasm. The catalysed reaction is 4-phospho-D-erythronate + NAD(+) = (R)-3-hydroxy-2-oxo-4-phosphooxybutanoate + NADH + H(+). It participates in cofactor biosynthesis; pyridoxine 5'-phosphate biosynthesis; pyridoxine 5'-phosphate from D-erythrose 4-phosphate: step 2/5. In terms of biological role, catalyzes the oxidation of erythronate-4-phosphate to 3-hydroxy-2-oxo-4-phosphonooxybutanoate. This is Erythronate-4-phosphate dehydrogenase from Vibrio vulnificus (strain YJ016).